Reading from the N-terminus, the 1416-residue chain is Isonitrile lipopeptide synthase (1416 aa).

Positions 188-215 (LRETAKVAEALRRQADAVQRELTAEAGQ) form a coiled coil. The Carrier domain occupies 965 to 1028 (RVWSRHLGRP…NLVCDLGSNP (64 aa)). S988 bears the O-(pantetheine 4'-phosphoryl)serine mark.

This sequence belongs to the ATP-dependent AMP-binding enzyme family. Pantetheine 4'-phosphate serves as cofactor.

The catalysed reaction is 2 a (3R)-3-isocyanyl-fatty acyl-[ACP] + L-lysine + ATP + 2 NADPH = an isonitrile lipopeptide + 2 holo-[ACP] + AMP + diphosphate + 2 NADP(+). In terms of biological role, nonribosomal peptide synthetase (NRPS) involved in the biosynthesis of a unique class of isonitrile lipopeptides (INLPs) that seem to play a role in metal acquisition in M.marinum. Catalyzes the final step in the pathway, i.e. the condensation of a (3R)-3-isocyanyl-fatty acyl-[ACP] to both amino groups of a lysine, producing isonitrile lipopeptides. This is Isonitrile lipopeptide synthase from Mycobacterium marinum (strain ATCC BAA-535 / M).